A 461-amino-acid polypeptide reads, in one-letter code: Homocitrate synthase (461 aa).

One can recognise a Pyruvate carboxyltransferase domain in the interval 4–259 (VGILDSTLRE…IEVVKLDKLQ (256 aa)). A 2-oxoglutarate-binding site is contributed by Arg12. Glu13 serves as a coordination point for Mg(2+). 2-oxoglutarate-binding residues include His76, Arg136, and Thr170. His198 and His200 together coordinate Mg(2+). Residue His292 is the Proton acceptor of the active site.

Belongs to the alpha-IPM synthase/homocitrate synthase family. Homocitrate synthase LYS20/LYS21 subfamily. Mg(2+) serves as cofactor. It depends on Mn(2+) as a cofactor.

It catalyses the reaction acetyl-CoA + 2-oxoglutarate + H2O = (2R)-homocitrate + CoA + H(+). It functions in the pathway amino-acid biosynthesis; L-lysine biosynthesis via AAA pathway; L-alpha-aminoadipate from 2-oxoglutarate: step 1/5. Functionally, catalyzes the aldol-type condensation of 2-oxoglutarate with acetyl-CoA to yield homocitrate. Carries out the first step of the alpha-aminoadipate (AAA) lysine biosynthesis pathway. This chain is Homocitrate synthase, found in Saccharolobus islandicus (strain L.S.2.15 / Lassen #1) (Sulfolobus islandicus).